The following is a 201-amino-acid chain: Pyridoxal 5'-phosphate synthase subunit PdxT (201 aa).

51 to 53 (GES) contributes to the L-glutamine binding site. Catalysis depends on Cys-83, which acts as the Nucleophile. L-glutamine-binding positions include Arg-112 and 141–142 (IR). Active-site charge relay system residues include His-182 and Glu-184.

The protein belongs to the glutaminase PdxT/SNO family. As to quaternary structure, in the presence of PdxS, forms a dodecamer of heterodimers. Only shows activity in the heterodimer.

The catalysed reaction is aldehydo-D-ribose 5-phosphate + D-glyceraldehyde 3-phosphate + L-glutamine = pyridoxal 5'-phosphate + L-glutamate + phosphate + 3 H2O + H(+). It catalyses the reaction L-glutamine + H2O = L-glutamate + NH4(+). It participates in cofactor biosynthesis; pyridoxal 5'-phosphate biosynthesis. Functionally, catalyzes the hydrolysis of glutamine to glutamate and ammonia as part of the biosynthesis of pyridoxal 5'-phosphate. The resulting ammonia molecule is channeled to the active site of PdxS. This Thermobifida fusca (strain YX) protein is Pyridoxal 5'-phosphate synthase subunit PdxT.